We begin with the raw amino-acid sequence, 232 residues long: Large ribosomal subunit protein uL1 (232 aa).

The protein belongs to the universal ribosomal protein uL1 family. Part of the 50S ribosomal subunit.

Functionally, binds directly to 23S rRNA. The L1 stalk is quite mobile in the ribosome, and is involved in E site tRNA release. Protein L1 is also a translational repressor protein, it controls the translation of the L11 operon by binding to its mRNA. The sequence is that of Large ribosomal subunit protein uL1 from Paraburkholderia phytofirmans (strain DSM 17436 / LMG 22146 / PsJN) (Burkholderia phytofirmans).